Consider the following 93-residue polypeptide: HIG1 domain family member 1A, mitochondrial (93 aa).

Ser2 carries the N-acetylserine modification. The HIG1 domain occupies 2–93 (STNTDLSLSS…YQEFWAKRKP (92 aa)). Ser8 carries the post-translational modification Phosphoserine. The next 2 helical transmembrane spans lie at 28 to 48 (PFVP…LYKL) and 69 to 89 (GFVV…EFWA). Over 90 to 93 (KRKP) the chain is Mitochondrial matrix.

As to quaternary structure, associates with cytochrome c oxidase (COX, complex IV); proposed complex component. Also associates with respiratory chain supercomplexes. In terms of tissue distribution, expressed in brain and spinal cord.

Its subcellular location is the mitochondrion membrane. It localises to the mitochondrion inner membrane. Functionally, proposed subunit of cytochrome c oxidase (COX, complex IV), which is the terminal component of the mitochondrial respiratory chain that catalyzes the reduction of oxygen to water. May play a role in the assembly of respiratory supercomplexes. The sequence is that of HIG1 domain family member 1A, mitochondrial (Higd1a) from Rattus norvegicus (Rat).